The following is a 186-amino-acid chain: ATP synthase subunit delta (186 aa).

It belongs to the ATPase delta chain family. As to quaternary structure, F-type ATPases have 2 components, F(1) - the catalytic core - and F(0) - the membrane proton channel. F(1) has five subunits: alpha(3), beta(3), gamma(1), delta(1), epsilon(1). F(0) has three main subunits: a(1), b(2) and c(10-14). The alpha and beta chains form an alternating ring which encloses part of the gamma chain. F(1) is attached to F(0) by a central stalk formed by the gamma and epsilon chains, while a peripheral stalk is formed by the delta and b chains.

The protein resides in the cell inner membrane. F(1)F(0) ATP synthase produces ATP from ADP in the presence of a proton or sodium gradient. F-type ATPases consist of two structural domains, F(1) containing the extramembraneous catalytic core and F(0) containing the membrane proton channel, linked together by a central stalk and a peripheral stalk. During catalysis, ATP synthesis in the catalytic domain of F(1) is coupled via a rotary mechanism of the central stalk subunits to proton translocation. Functionally, this protein is part of the stalk that links CF(0) to CF(1). It either transmits conformational changes from CF(0) to CF(1) or is implicated in proton conduction. This chain is ATP synthase subunit delta, found in Ruegeria sp. (strain TM1040) (Silicibacter sp.).